The chain runs to 726 residues: AP-1 complex subunit beta-1 (726 aa).

Belongs to the adaptor complexes large subunit family. In terms of assembly, adaptor protein complex 1 (AP-1) is a heterotetramer composed of two large adaptins (gamma-type subunit APL4 and beta-type subunit APL2), a medium adaptin (mu-type subunit APM1) and a small adaptin (sigma-type subunit APS1). Interacts with CHC1. Interacts with APM2, probably forming an alternative AP-1-like complex.

The protein resides in the cell membrane. It is found in the membrane. It localises to the coated pit. Functionally, adaptins are components of the adaptor complexes which link clathrin to receptors in coated vesicles. Clathrin-associated protein complexes are believed to interact with the cytoplasmic tails of membrane proteins, leading to their selection and concentration. The AP-1 complex interacts directly with clathrin. The sequence is that of AP-1 complex subunit beta-1 (APL2) from Saccharomyces cerevisiae (strain ATCC 204508 / S288c) (Baker's yeast).